Here is a 29-residue protein sequence, read N- to C-terminus: Cysteine-rich venom protein 25-A (29 aa).

The protein belongs to the CRISP family. Contains 8 disulfide bonds. As to expression, expressed by the venom gland.

The protein localises to the secreted. The polypeptide is Cysteine-rich venom protein 25-A (Naja haje haje (Egyptian cobra)).